The chain runs to 961 residues: Valine--tRNA ligase (961 aa).

The 'HIGH' region motif lies at 48–58 (PNVTGSLHMGH). Positions 560–564 (KMSKS) match the 'KMSKS' region motif. Lys563 contributes to the ATP binding site. A coiled-coil region spans residues 892–961 (FINKDTELAR…QAQFKAIEAL (70 aa)).

Belongs to the class-I aminoacyl-tRNA synthetase family. ValS type 1 subfamily. In terms of assembly, monomer.

The protein localises to the cytoplasm. It catalyses the reaction tRNA(Val) + L-valine + ATP = L-valyl-tRNA(Val) + AMP + diphosphate. Functionally, catalyzes the attachment of valine to tRNA(Val). As ValRS can inadvertently accommodate and process structurally similar amino acids such as threonine, to avoid such errors, it has a 'posttransfer' editing activity that hydrolyzes mischarged Thr-tRNA(Val) in a tRNA-dependent manner. The chain is Valine--tRNA ligase from Haemophilus ducreyi (strain 35000HP / ATCC 700724).